Reading from the N-terminus, the 428-residue chain is Exodeoxyribonuclease 7 large subunit (428 aa).

The protein belongs to the XseA family. As to quaternary structure, heterooligomer composed of large and small subunits.

The protein resides in the cytoplasm. It carries out the reaction Exonucleolytic cleavage in either 5'- to 3'- or 3'- to 5'-direction to yield nucleoside 5'-phosphates.. In terms of biological role, bidirectionally degrades single-stranded DNA into large acid-insoluble oligonucleotides, which are then degraded further into small acid-soluble oligonucleotides. This is Exodeoxyribonuclease 7 large subunit from Mycobacterium leprae (strain TN).